A 109-amino-acid polypeptide reads, in one-letter code: Thioredoxin (109 aa).

One can recognise a Thioredoxin domain in the interval 2 to 107 (SISQVIDTSF…LLNTLQKHLK (106 aa)). Residues Cys31 and Cys34 each act as nucleophile in the active site. A disulfide bridge links Cys31 with Cys34.

It belongs to the thioredoxin family.

Its subcellular location is the plastid. It localises to the chloroplast. Its function is as follows. Participates in various redox reactions through the reversible oxidation of its active center dithiol to a disulfide and catalyzes dithiol-disulfide exchange reactions. In Griffithsia pacifica (Red alga), this protein is Thioredoxin (trxA).